The chain runs to 25 residues: Antimicrobial peptide THP3 (25 aa).

The protein localises to the secreted. Functionally, bactericidal activity; inhibits Staphylococcus aureus. In Meleagris gallopavo (Wild turkey), this protein is Antimicrobial peptide THP3.